The primary structure comprises 422 residues: Glycerol-3-phosphate dehydrogenase [NAD(+)] 2 (422 aa).

Residues 69–74, Phe157, Lys180, and Ala213 each bind NAD(+); that span reads GSGNWG. Position 180 (Lys180) interacts with substrate. The active-site Proton acceptor is the Lys273. NAD(+) contacts are provided by Arg338 and Gln367. Residue 338-339 coordinates substrate; that stretch reads RN.

It belongs to the NAD-dependent glycerol-3-phosphate dehydrogenase family.

The catalysed reaction is sn-glycerol 3-phosphate + NAD(+) = dihydroxyacetone phosphate + NADH + H(+). The sequence is that of Glycerol-3-phosphate dehydrogenase [NAD(+)] 2 (GPD2) from Candida glabrata (strain ATCC 2001 / BCRC 20586 / JCM 3761 / NBRC 0622 / NRRL Y-65 / CBS 138) (Yeast).